The chain runs to 108 residues: Large ribosomal subunit protein uL24 (108 aa).

Belongs to the universal ribosomal protein uL24 family. As to quaternary structure, part of the 50S ribosomal subunit.

Its function is as follows. One of two assembly initiator proteins, it binds directly to the 5'-end of the 23S rRNA, where it nucleates assembly of the 50S subunit. One of the proteins that surrounds the polypeptide exit tunnel on the outside of the subunit. The chain is Large ribosomal subunit protein uL24 from Mycoplasma mycoides subsp. mycoides SC (strain CCUG 32753 / NCTC 10114 / PG1).